The sequence spans 63 residues: Cecropin-A (63 aa).

Positions 1–22 (MNFVRILSFVFALVLALGAVSA) are cleaved as a signal peptide. A propeptide spanning residues 23-26 (APEP) is cleaved from the precursor. A Leucine amide modification is found at Leu-61.

The protein belongs to the cecropin family. In terms of tissue distribution, highest expression in fat body and hemocytes. Is also expressed in Malpighian tubules and to a much lesser extent in midgut. Not present in silk gland.

Its subcellular location is the secreted. Functionally, cecropins have lytic and antibacterial activity against several Gram-positive and Gram-negative bacteria. The sequence is that of Cecropin-A (CECA) from Bombyx mori (Silk moth).